The sequence spans 187 residues: Probable chorismate pyruvate-lyase (187 aa).

Positions 80, 117, and 176 each coordinate substrate.

This sequence belongs to the UbiC family.

Its subcellular location is the cytoplasm. It carries out the reaction chorismate = 4-hydroxybenzoate + pyruvate. The protein operates within cofactor biosynthesis; ubiquinone biosynthesis. Functionally, removes the pyruvyl group from chorismate, with concomitant aromatization of the ring, to provide 4-hydroxybenzoate (4HB) for the ubiquinone pathway. This chain is Probable chorismate pyruvate-lyase, found in Halorhodospira halophila (strain DSM 244 / SL1) (Ectothiorhodospira halophila (strain DSM 244 / SL1)).